Consider the following 300-residue polypeptide: Putative hydrolase ML2424 (300 aa).

Asp-56 (nucleophile) is an active-site residue. Mg(2+) contacts are provided by Asp-56, Asp-58, and Asp-231. Catalysis depends on Asp-58, which acts as the Proton donor.

The protein belongs to the HAD-like hydrolase superfamily. SerB family. Mg(2+) serves as cofactor.

The polypeptide is Putative hydrolase ML2424 (Mycobacterium leprae (strain TN)).